The chain runs to 294 residues: N-acetylmuramic acid 6-phosphate etherase (294 aa).

The 164-residue stretch at 54 to 217 folds into the SIS domain; sequence VTKSFEEEGR…STASMIGVGK (164 aa). Glu82 (proton donor) is an active-site residue. Glu113 is a catalytic residue.

It belongs to the GCKR-like family. MurNAc-6-P etherase subfamily. In terms of assembly, homodimer.

The enzyme catalyses N-acetyl-D-muramate 6-phosphate + H2O = N-acetyl-D-glucosamine 6-phosphate + (R)-lactate. Its pathway is amino-sugar metabolism; N-acetylmuramate degradation. Its function is as follows. Specifically catalyzes the cleavage of the D-lactyl ether substituent of MurNAc 6-phosphate, producing GlcNAc 6-phosphate and D-lactate. In Bacillus mycoides (strain KBAB4) (Bacillus weihenstephanensis), this protein is N-acetylmuramic acid 6-phosphate etherase.